Reading from the N-terminus, the 264-residue chain is 3-methyl-2-oxobutanoate hydroxymethyltransferase (264 aa).

Mg(2+) is bound by residues Asp-45 and Asp-84. Residues 45-46 (DS), Asp-84, and Lys-113 each bind 3-methyl-2-oxobutanoate. Glu-115 contacts Mg(2+). Glu-182 functions as the Proton acceptor in the catalytic mechanism.

Belongs to the PanB family. In terms of assembly, homodecamer; pentamer of dimers. Mg(2+) is required as a cofactor.

The protein resides in the cytoplasm. It carries out the reaction 3-methyl-2-oxobutanoate + (6R)-5,10-methylene-5,6,7,8-tetrahydrofolate + H2O = 2-dehydropantoate + (6S)-5,6,7,8-tetrahydrofolate. It participates in cofactor biosynthesis; (R)-pantothenate biosynthesis; (R)-pantoate from 3-methyl-2-oxobutanoate: step 1/2. Its function is as follows. Catalyzes the reversible reaction in which hydroxymethyl group from 5,10-methylenetetrahydrofolate is transferred onto alpha-ketoisovalerate to form ketopantoate. In Helicobacter hepaticus (strain ATCC 51449 / 3B1), this protein is 3-methyl-2-oxobutanoate hydroxymethyltransferase.